Reading from the N-terminus, the 416-residue chain is Imidazolonepropionase (416 aa).

Fe(3+) is bound by residues His81 and His83. Zn(2+)-binding residues include His81 and His83. The 4-imidazolone-5-propanoate site is built by Arg90, Tyr153, and His186. Residue Tyr153 participates in N-formimidoyl-L-glutamate binding. Fe(3+) is bound at residue His251. A Zn(2+)-binding site is contributed by His251. 4-imidazolone-5-propanoate is bound at residue Gln254. Asp326 provides a ligand contact to Fe(3+). Asp326 contacts Zn(2+). Positions 328 and 330 each coordinate N-formimidoyl-L-glutamate. Residue Thr331 coordinates 4-imidazolone-5-propanoate.

Belongs to the metallo-dependent hydrolases superfamily. HutI family. Zn(2+) is required as a cofactor. The cofactor is Fe(3+).

It is found in the cytoplasm. It carries out the reaction 4-imidazolone-5-propanoate + H2O = N-formimidoyl-L-glutamate. It participates in amino-acid degradation; L-histidine degradation into L-glutamate; N-formimidoyl-L-glutamate from L-histidine: step 3/3. In terms of biological role, catalyzes the hydrolytic cleavage of the carbon-nitrogen bond in imidazolone-5-propanoate to yield N-formimidoyl-L-glutamate. It is the third step in the universal histidine degradation pathway. This is Imidazolonepropionase from Paracidovorax citrulli (strain AAC00-1) (Acidovorax citrulli).